A 70-amino-acid polypeptide reads, in one-letter code: Potassium channel toxin kappa-KTx 2.5 (70 aa).

The N-terminal stretch at 1–26 (MESSRKSYVLMLFLAFVIMNVCSVSG) is a signal peptide. A propeptide spanning residues 27–42 (EPKDGEIAGFEMEEAR) is cleaved from the precursor. 2 disulfide bridges follow: C46–C64 and C50–C60.

It belongs to the short scorpion toxin superfamily. Potassium channel inhibitor kappa-KTx family. Kappa-KTx 2 subfamily. Expressed by the venom gland.

It localises to the secreted. Functionally, voltage-independently blocks potassium currents on hKv1.1/KCNA1 (IC(50)=217 uM), and hKv1.4/KCNA4 (IC(50)=71 uM) (expressed in CHO cells). The polypeptide is Potassium channel toxin kappa-KTx 2.5 (Opisthacanthus cayaporum (South American scorpion)).